Here is a 496-residue protein sequence, read N- to C-terminus: Glycerol kinase (496 aa).

Thr12 contributes to the ADP binding site. ATP contacts are provided by Thr12, Thr13, and Ser14. Residue Thr12 participates in sn-glycerol 3-phosphate binding. ADP is bound at residue Arg16. Arg82, Glu83, and Tyr134 together coordinate sn-glycerol 3-phosphate. Positions 82, 83, and 134 each coordinate glycerol. Position 230 is a phosphohistidine; by HPr (His230). Asp244 contributes to the sn-glycerol 3-phosphate binding site. Glycerol is bound by residues Asp244 and Gln245. Positions 266 and 309 each coordinate ADP. ATP is bound by residues Thr266, Gly309, Gln313, and Gly410. Residues Gly410 and Asn414 each coordinate ADP.

Belongs to the FGGY kinase family. As to quaternary structure, homotetramer and homodimer (in equilibrium). The phosphoenolpyruvate-dependent sugar phosphotransferase system (PTS), including enzyme I, and histidine-containing protein (HPr) are required for the phosphorylation, which leads to the activation of the enzyme.

The catalysed reaction is glycerol + ATP = sn-glycerol 3-phosphate + ADP + H(+). Its pathway is polyol metabolism; glycerol degradation via glycerol kinase pathway; sn-glycerol 3-phosphate from glycerol: step 1/1. With respect to regulation, activated by phosphorylation and inhibited by fructose 1,6-bisphosphate (FBP). Key enzyme in the regulation of glycerol uptake and metabolism. Catalyzes the phosphorylation of glycerol to yield sn-glycerol 3-phosphate. The polypeptide is Glycerol kinase (Bacillus cereus (strain G9842)).